Consider the following 632-residue polypeptide: Chaperone protein HtpG (632 aa).

Residues 1 to 339 (MAHETMSFQA…SADLPLNVSR (339 aa)) are a; substrate-binding. Residues 340–559 (EILQESRDVK…DNDMSGYLQR (220 aa)) form a b region. Residues 560-632 (MLKAAGQNAP…TNALLLSRAA (73 aa)) are c.

Belongs to the heat shock protein 90 family. In terms of assembly, homodimer.

The protein localises to the cytoplasm. Its function is as follows. Molecular chaperone. Has ATPase activity. In Burkholderia ambifaria (strain ATCC BAA-244 / DSM 16087 / CCUG 44356 / LMG 19182 / AMMD) (Burkholderia cepacia (strain AMMD)), this protein is Chaperone protein HtpG.